The following is a 376-amino-acid chain: ORC1-type DNA replication protein 2 (376 aa).

ATP contacts are provided by residues 73–77, tyrosine 209, and arginine 221; that span reads TGKTS.

This sequence belongs to the CDC6/cdc18 family.

Its function is as follows. Involved in regulation of DNA replication. The sequence is that of ORC1-type DNA replication protein 2 (cdc6-2) from Archaeoglobus fulgidus (strain ATCC 49558 / DSM 4304 / JCM 9628 / NBRC 100126 / VC-16).